The chain runs to 1120 residues: Phosphatidylinositide phosphatase SAC2 (1120 aa).

An SAC domain is found at 167–518 (YKIFMDSDSF…GDTISRQYAG (352 aa)). Residues 593 to 760 (RGAQEQVSLL…RHSKPHEDIM (168 aa)) enclose the hSac2 domain. 2 disordered regions span residues 837 to 881 (SSLE…SREN) and 979 to 1008 (PAPK…LPRP). Positions 851 to 860 (LKDHGPHSEE) are enriched in basic and acidic residues. Polar residues-rich tracts occupy residues 864–879 (DSDS…SGSR) and 998–1007 (SSHSQNQLPR).

The protein resides in the membrane. The protein localises to the clathrin-coated pit. Its subcellular location is the early endosome. It is found in the recycling endosome. It catalyses the reaction a myo-inositol phosphate + H2O = myo-inositol + phosphate. Its function is as follows. Inositol 4-phosphatase which mainly acts on phosphatidylinositol 4-phosphate. May be functionally linked to OCRL, which converts phosphatidylinositol 4,5-bisphosphate to phosphatidylinositol, for a sequential dephosphorylation of phosphatidylinositol 4,5-bisphosphate at the 5 and 4 position of inositol, thus playing an important role in the endocytic recycling. The protein is Phosphatidylinositide phosphatase SAC2 of Danio rerio (Zebrafish).